The primary structure comprises 447 residues: Chromosomal replication initiator protein DnaA (447 aa).

The domain I, interacts with DnaA modulators stretch occupies residues 1–79 (MVSCENLWQQ…TGQEITVKLI (79 aa)). The tract at residues 79-105 (ITDGLEPHSLIGQESSLPMETTPKNAT) is domain II. Positions 106–322 (ALNGKYTFSR…GALIRAIAYT (217 aa)) are domain III, AAA+ region. Positions 150, 152, 153, and 154 each coordinate ATP. The segment at 323–447 (SLSNVAMTVE…INIAGQAPES (125 aa)) is domain IV, binds dsDNA.

Belongs to the DnaA family. As to quaternary structure, oligomerizes as a right-handed, spiral filament on DNA at oriC.

The protein resides in the cytoplasm. In terms of biological role, plays an essential role in the initiation and regulation of chromosomal replication. ATP-DnaA binds to the origin of replication (oriC) to initiate formation of the DNA replication initiation complex once per cell cycle. Binds the DnaA box (a 9 base pair repeat at the origin) and separates the double-stranded (ds)DNA. Forms a right-handed helical filament on oriC DNA; dsDNA binds to the exterior of the filament while single-stranded (ss)DNA is stabiized in the filament's interior. The ATP-DnaA-oriC complex binds and stabilizes one strand of the AT-rich DNA unwinding element (DUE), permitting loading of DNA polymerase. After initiation quickly degrades to an ADP-DnaA complex that is not apt for DNA replication. Binds acidic phospholipids. Functionally, isolated domain IV (residues 348-447) binds both E.coli and B.subtilis oriC. The sequence is that of Chromosomal replication initiator protein DnaA from Synechocystis sp. (strain ATCC 27184 / PCC 6803 / Kazusa).